The sequence spans 350 residues: Heat-inducible transcription repressor HrcA (350 aa).

It belongs to the HrcA family.

Negative regulator of class I heat shock genes (grpE-dnaK-dnaJ and groELS operons). Prevents heat-shock induction of these operons. This Methylococcus capsulatus (strain ATCC 33009 / NCIMB 11132 / Bath) protein is Heat-inducible transcription repressor HrcA.